Here is a 337-residue protein sequence, read N- to C-terminus: Probable dual-specificity RNA methyltransferase RlmN (337 aa).

The Proton acceptor role is filled by Glu-88. The 231-residue stretch at Ser-94 to Asp-324 folds into the Radical SAM core domain. Cys-101 and Cys-327 are oxidised to a cystine. Cys-108, Cys-112, and Cys-115 together coordinate [4Fe-4S] cluster. S-adenosyl-L-methionine is bound by residues Gly-155 to Glu-156, Ser-185, Ser-208 to His-210, and Asn-284. Cys-327 serves as the catalytic S-methylcysteine intermediate.

This sequence belongs to the radical SAM superfamily. RlmN family. Requires [4Fe-4S] cluster as cofactor.

It localises to the cytoplasm. It catalyses the reaction adenosine(2503) in 23S rRNA + 2 reduced [2Fe-2S]-[ferredoxin] + 2 S-adenosyl-L-methionine = 2-methyladenosine(2503) in 23S rRNA + 5'-deoxyadenosine + L-methionine + 2 oxidized [2Fe-2S]-[ferredoxin] + S-adenosyl-L-homocysteine. The catalysed reaction is adenosine(37) in tRNA + 2 reduced [2Fe-2S]-[ferredoxin] + 2 S-adenosyl-L-methionine = 2-methyladenosine(37) in tRNA + 5'-deoxyadenosine + L-methionine + 2 oxidized [2Fe-2S]-[ferredoxin] + S-adenosyl-L-homocysteine. In terms of biological role, specifically methylates position 2 of adenine 2503 in 23S rRNA and position 2 of adenine 37 in tRNAs. The chain is Probable dual-specificity RNA methyltransferase RlmN from Microcystis aeruginosa (strain NIES-843 / IAM M-2473).